A 545-amino-acid polypeptide reads, in one-letter code: Endo-beta-N-acetylglucosaminidase (545 aa).

The N-terminal stretch at 1–36 is a signal peptide; that stretch reads MTFIKQMMPRYVASMTAGIVAAAMAATCAFAPVANA. Positions 51 to 333 constitute a GH18 domain; it reads RHFMVYYRAW…EDLRRIVPSN (283 aa). E184 (proton donor) is an active-site residue. A disordered region spans residues 486-511; that stretch reads PVPTPDSTDQNGNRDKVTNHKVQGQP. The helical transmembrane segment at 518 to 538 threads the bilayer; it reads GISTDIIVAVGVTLAIAGVAL.

Belongs to the glycosyl hydrolase 18 family.

The protein localises to the cell membrane. The catalysed reaction is an N(4)-(oligosaccharide-(1-&gt;3)-[oligosaccharide-(1-&gt;6)]-beta-D-Man-(1-&gt;4)-beta-D-GlcNAc-(1-&gt;4)-alpha-D-GlcNAc)-L-asparaginyl-[protein] + H2O = an oligosaccharide-(1-&gt;3)-[oligosaccharide-(1-&gt;6)]-beta-D-Man-(1-&gt;4)-D-GlcNAc + N(4)-(N-acetyl-beta-D-glucosaminyl)-L-asparaginyl-[protein]. Its function is as follows. Endoglycosidase with broad specificity that cleaves the chitobiose core of high mannose and complex N-linked glycans. Is able to release N-glycans from diverse host glycoproteins such as human and bovine lactoferrin, immunoglobulins A and G, and ribonuclease B. Is active directly on human breast milk - a complex matrix of lipids, oligosaccharides, and proteins with disparate glycosylation types - successfully removing a significant proportion of the total amount of N-glycans. Does not recognize O-linked glycans or free human milk oligosaccharides (HMO). This Bifidobacterium longum subsp. infantis (strain ATCC 15697 / DSM 20088 / JCM 1222 / NCTC 11817 / S12) protein is Endo-beta-N-acetylglucosaminidase.